Here is an 841-residue protein sequence, read N- to C-terminus: Translation initiation factor IF-2 (841 aa).

5 stretches are compositionally biased toward basic and acidic residues: residues 1-12, 52-92, 114-170, 188-202, and 213-235; these read MSDNEIKNEAPK, ALKA…EATK, EQPK…REEA, READRDNDRRSEANR, and KKGDREDKNERNADRRNQKDVKG. Disordered stretches follow at residues 1 to 24 and 52 to 246; these read MSDNEIKNEAPKKLSLQRRTKTTV and ALKA…GSAL. The region spanning 340–510 is the tr-type G domain; sequence TRAPVVTIMG…LLQSEVLELT (171 aa). The segment at 349 to 356 is G1; the sequence is GHVDHGKT. 349–356 serves as a coordination point for GTP; that stretch reads GHVDHGKT. The G2 stretch occupies residues 374-378; sequence GITQH. Residues 396–399 form a G3 region; it reads DTPG. GTP-binding positions include 396–400 and 450–453; these read DTPGH and NKID. A G4 region spans residues 450–453; that stretch reads NKID. The interval 486–488 is G5; sequence SAK.

The protein belongs to the TRAFAC class translation factor GTPase superfamily. Classic translation factor GTPase family. IF-2 subfamily.

The protein localises to the cytoplasm. In terms of biological role, one of the essential components for the initiation of protein synthesis. Protects formylmethionyl-tRNA from spontaneous hydrolysis and promotes its binding to the 30S ribosomal subunits. Also involved in the hydrolysis of GTP during the formation of the 70S ribosomal complex. In Actinobacillus pleuropneumoniae serotype 5b (strain L20), this protein is Translation initiation factor IF-2.